The following is a 213-amino-acid chain: Adenylate kinase (213 aa).

10 to 15 (GAGKGT) serves as a coordination point for ATP. Positions 30–59 (STGDMFRAAMANQTEMGVLAKSYIDKGDLV) are NMP. AMP is bound by residues Thr31, Arg36, 57 to 59 (DLV), 86 to 89 (GYPR), and Gln93. The LID stretch occupies residues 127–160 (GRIINKKTGETFHKIFNPPVGDYKEEDFYQREDD). Residues Arg128 and 137–138 (TF) each bind ATP. Positions 157 and 168 each coordinate AMP. Lys196 lines the ATP pocket.

It belongs to the adenylate kinase family. As to quaternary structure, monomer.

The protein resides in the cytoplasm. It carries out the reaction AMP + ATP = 2 ADP. The protein operates within purine metabolism; AMP biosynthesis via salvage pathway; AMP from ADP: step 1/1. Functionally, catalyzes the reversible transfer of the terminal phosphate group between ATP and AMP. Plays an important role in cellular energy homeostasis and in adenine nucleotide metabolism. The sequence is that of Adenylate kinase from Streptococcus equi subsp. equi (strain 4047).